A 164-amino-acid polypeptide reads, in one-letter code: Phosphopantetheine adenylyltransferase (164 aa).

Thr10 provides a ligand contact to substrate. Residues 10–11 and His18 contribute to the ATP site; that span reads TF. Substrate contacts are provided by Lys44, Leu76, and Arg90. ATP contacts are provided by residues 91–93, Glu101, and 126–132; these read GLR and YAFISSS.

This sequence belongs to the bacterial CoaD family. In terms of assembly, homohexamer. It depends on Mg(2+) as a cofactor.

The protein resides in the cytoplasm. It catalyses the reaction (R)-4'-phosphopantetheine + ATP + H(+) = 3'-dephospho-CoA + diphosphate. It functions in the pathway cofactor biosynthesis; coenzyme A biosynthesis; CoA from (R)-pantothenate: step 4/5. Its function is as follows. Reversibly transfers an adenylyl group from ATP to 4'-phosphopantetheine, yielding dephospho-CoA (dPCoA) and pyrophosphate. The sequence is that of Phosphopantetheine adenylyltransferase from Halorhodospira halophila (strain DSM 244 / SL1) (Ectothiorhodospira halophila (strain DSM 244 / SL1)).